The sequence spans 767 residues: Actin filament-associated protein 1-like 1 (767 aa).

The segment covering 83 to 97 (LRDMSDDGERSKEAS) has biased composition (basic and acidic residues). Residues 83-145 (LRDMSDDGER…KSPEYISSHN (63 aa)) are disordered. 5 positions are modified to phosphoserine: Ser87, Ser93, Ser97, Ser103, and Ser152. Residues 164–173 (SYPTTRMNGE) show a composition bias toward polar residues. The interval 164–210 (SYPTTRMNGESKSSYNDSDAMSSSYESYDEEEEEEKGRQPKHQWPSE) is disordered. The span at 174 to 189 (SKSSYNDSDAMSSSYE) shows a compositional bias: low complexity. The PH 1 domain occupies 219–315 (DCRICAFLLR…WLKVIREVSR (97 aa)). Phosphoserine occurs at positions 328 and 342. A disordered region spans residues 341-381 (LSQEKQNSDSDSLGMNDSSSTLSRREACEHGKGKKNSLAEL). The segment covering 349–362 (DSDSLGMNDSSSTL) has biased composition (polar residues). In terms of domain architecture, PH 2 spans 417–511 (EAPCCGYLNV…WLGLLLVEMG (95 aa)). The residue at position 556 (Tyr556) is a Phosphotyrosine. Residues 563–605 (KVQDEEPQRPTGAQVKRHASSCSEKSHRADPQVKVKRHASSAN) are disordered. Residues 586 to 595 (EKSHRADPQV) are compositionally biased toward basic and acidic residues. The stretch at 610–700 (GKNRAEEDAR…AVKERLQQSL (91 aa)) forms a coiled coil. The disordered stretch occupies residues 704-767 (PALGLSVSSK…KAKEWEMKKT (64 aa)). Polar residues predominate over residues 709–733 (SVSSKSKSQETTNKPQSSVPEQSLP). Position 746 is a phosphoserine (Ser746). Residues 758–767 (KAKEWEMKKT) are compositionally biased toward basic and acidic residues.

In terms of assembly, interacts with CTTN.

Its subcellular location is the cytoplasm. The protein localises to the cell projection. It localises to the podosome. It is found in the invadopodium. May be involved in podosome and invadosome formation. The protein is Actin filament-associated protein 1-like 1 (Afap1l1) of Rattus norvegicus (Rat).